Reading from the N-terminus, the 180-residue chain is NAD(P)H-quinone oxidoreductase subunit I, chloroplastic (180 aa).

2 consecutive 4Fe-4S ferredoxin-type domains span residues 55–84 (GRIH…VDWR) and 95–124 (LNYS…MTEE). Residues Cys64, Cys67, Cys70, Cys74, Cys104, Cys107, Cys110, and Cys114 each coordinate [4Fe-4S] cluster.

This sequence belongs to the complex I 23 kDa subunit family. In terms of assembly, NDH is composed of at least 16 different subunits, 5 of which are encoded in the nucleus. Requires [4Fe-4S] cluster as cofactor.

The protein localises to the plastid. It is found in the chloroplast thylakoid membrane. It carries out the reaction a plastoquinone + NADH + (n+1) H(+)(in) = a plastoquinol + NAD(+) + n H(+)(out). It catalyses the reaction a plastoquinone + NADPH + (n+1) H(+)(in) = a plastoquinol + NADP(+) + n H(+)(out). NDH shuttles electrons from NAD(P)H:plastoquinone, via FMN and iron-sulfur (Fe-S) centers, to quinones in the photosynthetic chain and possibly in a chloroplast respiratory chain. The immediate electron acceptor for the enzyme in this species is believed to be plastoquinone. Couples the redox reaction to proton translocation, and thus conserves the redox energy in a proton gradient. This Drimys granadensis protein is NAD(P)H-quinone oxidoreductase subunit I, chloroplastic.